Reading from the N-terminus, the 117-residue chain is Large ribosomal subunit protein uL18 (117 aa).

The protein belongs to the universal ribosomal protein uL18 family. Part of the 50S ribosomal subunit; part of the 5S rRNA/L5/L18/L25 subcomplex. Contacts the 5S and 23S rRNAs.

Its function is as follows. This is one of the proteins that bind and probably mediate the attachment of the 5S RNA into the large ribosomal subunit, where it forms part of the central protuberance. This is Large ribosomal subunit protein uL18 from Photorhabdus laumondii subsp. laumondii (strain DSM 15139 / CIP 105565 / TT01) (Photorhabdus luminescens subsp. laumondii).